The chain runs to 655 residues: DNA mismatch repair protein MutL (655 aa).

Disordered stretches follow at residues 357–416 and 439–460; these read EKKQ…DDYT and DFDSDISNHSDSDIKGSVSKDP. Residues 371–383 are compositionally biased toward basic and acidic residues; it reads SHEEDEKNDDKAY. Residues 402-416 are compositionally biased toward polar residues; that stretch reads NTSVSTSPNSDDDYT.

Belongs to the DNA mismatch repair MutL/HexB family.

This protein is involved in the repair of mismatches in DNA. It is required for dam-dependent methyl-directed DNA mismatch repair. May act as a 'molecular matchmaker', a protein that promotes the formation of a stable complex between two or more DNA-binding proteins in an ATP-dependent manner without itself being part of a final effector complex. The protein is DNA mismatch repair protein MutL of Staphylococcus saprophyticus subsp. saprophyticus (strain ATCC 15305 / DSM 20229 / NCIMB 8711 / NCTC 7292 / S-41).